Reading from the N-terminus, the 349-residue chain is Glycerol-3-phosphate dehydrogenase [NAD(P)+] (349 aa).

Positions 31, 32, 52, 53, and 126 each coordinate NADPH. Sn-glycerol 3-phosphate is bound by residues Lys126, Gly154, and Ser156. Ala158 lines the NADPH pocket. Lys209, Asp262, Ser272, Arg273, and Asn274 together coordinate sn-glycerol 3-phosphate. Lys209 acts as the Proton acceptor in catalysis. Residue Arg273 coordinates NADPH. NADPH-binding residues include Val297 and Glu299.

The protein belongs to the NAD-dependent glycerol-3-phosphate dehydrogenase family.

Its subcellular location is the cytoplasm. It catalyses the reaction sn-glycerol 3-phosphate + NAD(+) = dihydroxyacetone phosphate + NADH + H(+). The catalysed reaction is sn-glycerol 3-phosphate + NADP(+) = dihydroxyacetone phosphate + NADPH + H(+). Its pathway is membrane lipid metabolism; glycerophospholipid metabolism. Functionally, catalyzes the reduction of the glycolytic intermediate dihydroxyacetone phosphate (DHAP) to sn-glycerol 3-phosphate (G3P), the key precursor for phospholipid synthesis. In Clostridium tetani (strain Massachusetts / E88), this protein is Glycerol-3-phosphate dehydrogenase [NAD(P)+].